A 522-amino-acid chain; its full sequence is Glucose-1-phosphate adenylyltransferase large subunit 1, chloroplastic (522 aa).

Residues 1-54 (MVVSADCRISLSAPSCIRSSSTGLTRHIKLGSFCNGELMGKKLNLSQLPNIRLR) constitute a chloroplast transit peptide. Serine 428 is modified (phosphoserine).

It belongs to the bacterial/plant glucose-1-phosphate adenylyltransferase family. Heterotetramer. In terms of tissue distribution, leaves.

It is found in the plastid. Its subcellular location is the chloroplast. The catalysed reaction is alpha-D-glucose 1-phosphate + ATP + H(+) = ADP-alpha-D-glucose + diphosphate. Its pathway is glycan biosynthesis; starch biosynthesis. Its activity is regulated as follows. Activated by 3'phosphoglycerate, inhibited by orthophosphate. Allosteric regulation. Its function is as follows. This protein plays a role in synthesis of starch. It catalyzes the synthesis of the activated glycosyl donor, ADP-glucose from Glc-1-P and ATP. The chain is Glucose-1-phosphate adenylyltransferase large subunit 1, chloroplastic (ADG2) from Arabidopsis thaliana (Mouse-ear cress).